The primary structure comprises 73 residues: UPF0154 protein LJ_1506 (73 aa).

Residues 3-23 (LGLAIFLIIIALLIGLVGGFY) form a helical membrane-spanning segment.

It belongs to the UPF0154 family.

The protein localises to the cell membrane. In Lactobacillus johnsonii (strain CNCM I-12250 / La1 / NCC 533), this protein is UPF0154 protein LJ_1506.